A 268-amino-acid chain; its full sequence is Ribosomal RNA small subunit methyltransferase A (268 aa).

Residues Asn18, Leu20, Gly45, Glu66, Asp91, and Asn112 each coordinate S-adenosyl-L-methionine.

It belongs to the class I-like SAM-binding methyltransferase superfamily. rRNA adenine N(6)-methyltransferase family. RsmA subfamily.

Its subcellular location is the cytoplasm. It carries out the reaction adenosine(1518)/adenosine(1519) in 16S rRNA + 4 S-adenosyl-L-methionine = N(6)-dimethyladenosine(1518)/N(6)-dimethyladenosine(1519) in 16S rRNA + 4 S-adenosyl-L-homocysteine + 4 H(+). In terms of biological role, specifically dimethylates two adjacent adenosines (A1518 and A1519) in the loop of a conserved hairpin near the 3'-end of 16S rRNA in the 30S particle. May play a critical role in biogenesis of 30S subunits. The polypeptide is Ribosomal RNA small subunit methyltransferase A (Shewanella baltica (strain OS185)).